Reading from the N-terminus, the 714-residue chain is Elongation factor G-like protein (714 aa).

In terms of domain architecture, tr-type G spans 21 to 289 (GGVRNVVLVG…VATRGFPSPM (269 aa)). The G1 stretch occupies residues 30–37 (GPSGGGKT). 30 to 37 (GPSGGGKT) is a binding site for GTP. The tract at residues 73–77 (QRSVG) is G2. A G3 region spans residues 94 to 97 (DTPG). GTP-binding positions include 94–98 (DTPGY) and 148–151 (TKLD). The interval 148 to 151 (TKLD) is G4. The segment at 267 to 269 (CSS) is G5.

It belongs to the TRAFAC class translation factor GTPase superfamily. Classic translation factor GTPase family. EF-G/EF-2 subfamily.

In Mycobacterium tuberculosis (strain CDC 1551 / Oshkosh), this protein is Elongation factor G-like protein.